Here is an 89-residue protein sequence, read N- to C-terminus: MALVQERKQELVTKYKRHEKDTGSPEVQVALLTERIAYLTEHFKTHKKDHHSRRGLLKLVGQRRRLLDYLRSIDQGRYKTLIDQLGIRK.

The protein belongs to the universal ribosomal protein uS15 family. Part of the 30S ribosomal subunit. Forms a bridge to the 50S subunit in the 70S ribosome, contacting the 23S rRNA.

One of the primary rRNA binding proteins, it binds directly to 16S rRNA where it helps nucleate assembly of the platform of the 30S subunit by binding and bridging several RNA helices of the 16S rRNA. Its function is as follows. Forms an intersubunit bridge (bridge B4) with the 23S rRNA of the 50S subunit in the ribosome. The sequence is that of Small ribosomal subunit protein uS15 from Anaeromyxobacter sp. (strain Fw109-5).